We begin with the raw amino-acid sequence, 252 residues long: Phosphoribosylaminoimidazole-succinocarboxamide synthase 1 (252 aa).

Belongs to the SAICAR synthetase family.

It catalyses the reaction 5-amino-1-(5-phospho-D-ribosyl)imidazole-4-carboxylate + L-aspartate + ATP = (2S)-2-[5-amino-1-(5-phospho-beta-D-ribosyl)imidazole-4-carboxamido]succinate + ADP + phosphate + 2 H(+). It participates in purine metabolism; IMP biosynthesis via de novo pathway; 5-amino-1-(5-phospho-D-ribosyl)imidazole-4-carboxamide from 5-amino-1-(5-phospho-D-ribosyl)imidazole-4-carboxylate: step 1/2. This Caulobacter vibrioides (strain ATCC 19089 / CIP 103742 / CB 15) (Caulobacter crescentus) protein is Phosphoribosylaminoimidazole-succinocarboxamide synthase 1 (purC1).